Here is a 431-residue protein sequence, read N- to C-terminus: ATP-dependent RNA helicase DBP8 (431 aa).

The short motif at 2-30 (ADFKSLGLSKWLTESLRAMKITQPTAIQK) is the Q motif element. Residues 33 to 209 (IPKILEGRDC…NAPVQKGKPP (177 aa)) form the Helicase ATP-binding domain. Residue 46–53 (AKTGSGKT) coordinates ATP. The DEAD box motif lies at 155-158 (DEAD). A Helicase C-terminal domain is found at 242 to 389 (YLYQLLTCEE…TNKVHDTAVI (148 aa)). The segment at 404 to 431 (LMAMQKENFGERKRQQKKKQNDGKSLRS) is disordered. A compositionally biased stretch (basic and acidic residues) spans 411–431 (NFGERKRQQKKKQNDGKSLRS).

This sequence belongs to the DEAD box helicase family. DDX49/DBP8 subfamily. As to quaternary structure, interacts with ESF2.

The protein resides in the nucleus. Its subcellular location is the nucleolus. It carries out the reaction ATP + H2O = ADP + phosphate + H(+). In terms of biological role, ATP-binding RNA helicase involved in 40S ribosomal subunit biogenesis and is required for the normal formation of 18S rRNAs through pre-rRNA processing at A0, A1 and A2 sites. Required for vegetative growth. The chain is ATP-dependent RNA helicase DBP8 (DBP8) from Saccharomyces cerevisiae (strain YJM789) (Baker's yeast).